Consider the following 575-residue polypeptide: Homocysteine/cysteine synthase (575 aa).

K376 carries the N6-(pyridoxal phosphate)lysine modification.

The protein belongs to the trans-sulfuration enzymes family. MET7 subfamily. It depends on pyridoxal 5'-phosphate as a cofactor.

It localises to the cytoplasm. The catalysed reaction is O-acetyl-L-homoserine + methanethiol = L-methionine + acetate + H(+). It catalyses the reaction O-acetyl-L-homoserine + hydrogen sulfide = L-homocysteine + acetate. The enzyme catalyses O-acetyl-L-serine + hydrogen sulfide = L-cysteine + acetate. Its pathway is amino-acid biosynthesis; L-methionine biosynthesis via de novo pathway; L-homocysteine from O-acetyl-L-homoserine. Its function is as follows. Plays a role in inorganic sulfur assimilation during sulfur-limited conditions; catalyzes the conversion of O-acetyl-L-homoserine (OAH) into homocysteine in the methionine biosynthesis pathway. Also catalyzes the conversion of O-acetylserine (OAS) into cysteine, the last step in the cysteine biosynthesis pathway. However, it seems that in S.cerevisiae cysteine biosynthesis occurs exclusively through the cystathionine pathway and not via direct incorporation of sulfur into OAS. It therefore has no metabolic role in cysteine biosynthesis and may only have a regulatory role controlling OAS levels. This is Homocysteine/cysteine synthase from Saccharomyces cerevisiae (strain ATCC 204508 / S288c) (Baker's yeast).